The following is a 231-amino-acid chain: Cytochrome c oxidase subunit 2 (231 aa).

Residues 1-14 (MAHPAQLGLQNATS) lie on the Mitochondrial intermembrane side of the membrane. Residues 15 to 45 (PIMEELIAFHDHALMIIFLISSLVLYVISLM) form a helical membrane-spanning segment. The Mitochondrial matrix portion of the chain corresponds to 46–59 (LTTKLTHTSTMNAQ). The helical transmembrane segment at 60–87 (EIEMIWTILPAIILIMIALPSLRILYMT) threads the bilayer. At 88-231 (DEFNKPYLTL…WASYLYIVSL (144 aa)) the chain is on the mitochondrial intermembrane side. Residues H161, C196, E198, C200, H204, and M207 each contribute to the Cu cation site. E198 is a binding site for Mg(2+).

This sequence belongs to the cytochrome c oxidase subunit 2 family. In terms of assembly, component of the cytochrome c oxidase (complex IV, CIV), a multisubunit enzyme composed of 14 subunits. The complex is composed of a catalytic core of 3 subunits MT-CO1, MT-CO2 and MT-CO3, encoded in the mitochondrial DNA, and 11 supernumerary subunits COX4I, COX5A, COX5B, COX6A, COX6B, COX6C, COX7A, COX7B, COX7C, COX8 and NDUFA4, which are encoded in the nuclear genome. The complex exists as a monomer or a dimer and forms supercomplexes (SCs) in the inner mitochondrial membrane with NADH-ubiquinone oxidoreductase (complex I, CI) and ubiquinol-cytochrome c oxidoreductase (cytochrome b-c1 complex, complex III, CIII), resulting in different assemblies (supercomplex SCI(1)III(2)IV(1) and megacomplex MCI(2)III(2)IV(2)). Found in a complex with TMEM177, COA6, COX18, COX20, SCO1 and SCO2. Interacts with TMEM177 in a COX20-dependent manner. Interacts with COX20. Interacts with COX16. It depends on Cu cation as a cofactor.

Its subcellular location is the mitochondrion inner membrane. The catalysed reaction is 4 Fe(II)-[cytochrome c] + O2 + 8 H(+)(in) = 4 Fe(III)-[cytochrome c] + 2 H2O + 4 H(+)(out). In terms of biological role, component of the cytochrome c oxidase, the last enzyme in the mitochondrial electron transport chain which drives oxidative phosphorylation. The respiratory chain contains 3 multisubunit complexes succinate dehydrogenase (complex II, CII), ubiquinol-cytochrome c oxidoreductase (cytochrome b-c1 complex, complex III, CIII) and cytochrome c oxidase (complex IV, CIV), that cooperate to transfer electrons derived from NADH and succinate to molecular oxygen, creating an electrochemical gradient over the inner membrane that drives transmembrane transport and the ATP synthase. Cytochrome c oxidase is the component of the respiratory chain that catalyzes the reduction of oxygen to water. Electrons originating from reduced cytochrome c in the intermembrane space (IMS) are transferred via the dinuclear copper A center (CU(A)) of subunit 2 and heme A of subunit 1 to the active site in subunit 1, a binuclear center (BNC) formed by heme A3 and copper B (CU(B)). The BNC reduces molecular oxygen to 2 water molecules using 4 electrons from cytochrome c in the IMS and 4 protons from the mitochondrial matrix. The sequence is that of Cytochrome c oxidase subunit 2 (MT-CO2) from Alouatta palliata (Mantled howler monkey).